A 430-amino-acid polypeptide reads, in one-letter code: MKNLKINFISLGCPKNLVDTEVLIGKLNQENISFTANPEEADVILINTCGFIEPAKEESIETILEAVKLKQNSNKKIIVTGCLVERYKQELEKEIPEVDYFIDLKNQSQIPVLFDIKPKENTKRIISTPKHTAYLKISEGCDHTCSFCAIPNIRGKHRSKPIEALVEEAKYLANLGVKELNIVSQDTSYYGYDLYGKPMLFELLQHLEKIDGIKWIRLYYLYPSTVDEDFFKFIKGSEKILHYIEMPIQHSEDKILKDMMRGYRKKKLYQILEWKEKYTPDMTIRSSVIVGYPTETEEDFENMKNFIQEAQFDWLGVFVYSHEEGTPAYQKHKDKIPKKEKIRRLNEISALQENITEQKNKSLIGKELDIIIDGFSEEWETLPIGRSYRSAFEIDGAVYVETTEPVNVGDIIKVRIKDTIDKYDVVGEAE.

Residues 4 to 119 (LKINFISLGC…IPVLFDIKPK (116 aa)) enclose the MTTase N-terminal domain. [4Fe-4S] cluster is bound by residues Cys13, Cys49, Cys82, Cys141, Cys145, and Cys148. In terms of domain architecture, Radical SAM core spans 127–358 (STPKHTAYLK…SALQENITEQ (232 aa)). The 70-residue stretch at 361–430 (KSLIGKELDI…DKYDVVGEAE (70 aa)) folds into the TRAM domain.

The protein belongs to the methylthiotransferase family. RimO subfamily. The cofactor is [4Fe-4S] cluster.

The protein localises to the cytoplasm. The enzyme catalyses L-aspartate(89)-[ribosomal protein uS12]-hydrogen + (sulfur carrier)-SH + AH2 + 2 S-adenosyl-L-methionine = 3-methylsulfanyl-L-aspartate(89)-[ribosomal protein uS12]-hydrogen + (sulfur carrier)-H + 5'-deoxyadenosine + L-methionine + A + S-adenosyl-L-homocysteine + 2 H(+). In terms of biological role, catalyzes the methylthiolation of an aspartic acid residue of ribosomal protein uS12. This Sulfurihydrogenibium sp. (strain YO3AOP1) protein is Ribosomal protein uS12 methylthiotransferase RimO.